Here is a 194-residue protein sequence, read N- to C-terminus: Interferon alpha (194 aa).

Residues 1–23 (MALPSSFLVALVALGCNSVCSLG) form the signal peptide. Intrachain disulfides connect cysteine 24-cysteine 123 and cysteine 52-cysteine 166. N-linked (GlcNAc...) asparagine glycosylation occurs at asparagine 102.

Belongs to the alpha/beta interferon family.

The protein resides in the secreted. In terms of biological role, produced by macrophages, IFN-alpha have antiviral activities. Interferon stimulates the production of two enzymes: a protein kinase and an oligoadenylate synthetase. In Felis catus (Cat), this protein is Interferon alpha.